The sequence spans 178 residues: Ribosome maturation factor RimM (178 aa).

The region spanning 99 to 178 is the PRC barrel domain; that stretch reads EGDYYWHDLI…TIEVDWDAGF (80 aa).

It belongs to the RimM family. As to quaternary structure, binds ribosomal protein uS19.

It is found in the cytoplasm. Functionally, an accessory protein needed during the final step in the assembly of 30S ribosomal subunit, possibly for assembly of the head region. Essential for efficient processing of 16S rRNA. May be needed both before and after RbfA during the maturation of 16S rRNA. It has affinity for free ribosomal 30S subunits but not for 70S ribosomes. This Haemophilus influenzae (strain ATCC 51907 / DSM 11121 / KW20 / Rd) protein is Ribosome maturation factor RimM.